The primary structure comprises 35 residues: uncharacterized protein (35 aa).

This is an uncharacterized protein from Haemophilus influenzae (strain ATCC 51907 / DSM 11121 / KW20 / Rd).